A 335-amino-acid polypeptide reads, in one-letter code: MYPLARRILFALDAEKAHHFTLDALNTVYKLGLIPVTDNRTKPIKLMGMDLPNPVGLAAGLDKNGEYIDALGALGFGFLEIGTVTRNPQPGNPQPRLFRVPEHQGIINRMGFNNHGIDAMIRNIEKSKYQGVLGINIGKNAVTPIQNAADDYLICLEKAYAHASYITVNISSPNTKNLRALQGGGELGALLEALKNKQAQLAAAHGKYIPLAVKIAPDLDEAQIEDIARVVKSVEMDGIIATNTTIDKSSLGSHPLAGEQGGLSGFPVREKSNRVLKKLAEHIDGALPIIGVGGIMEGGDAAEKIRLGTTAVQVYSGLIYKGPALVKECLKALAR.

Residues 59-63 and Thr83 contribute to the FMN site; that span reads AGLDK. Lys63 is a binding site for substrate. 108–112 serves as a coordination point for substrate; that stretch reads NRMGF. FMN-binding residues include Asn136 and Asn169. Asn169 serves as a coordination point for substrate. Ser172 acts as the Nucleophile in catalysis. Asn174 is a substrate binding site. 2 residues coordinate FMN: Lys214 and Thr242. Residue 243–244 participates in substrate binding; that stretch reads NT. FMN is bound by residues Gly265, Gly294, and 315 to 316; that span reads YS.

It belongs to the dihydroorotate dehydrogenase family. Type 2 subfamily. In terms of assembly, monomer. It depends on FMN as a cofactor.

The protein localises to the cell membrane. The enzyme catalyses (S)-dihydroorotate + a quinone = orotate + a quinol. The protein operates within pyrimidine metabolism; UMP biosynthesis via de novo pathway; orotate from (S)-dihydroorotate (quinone route): step 1/1. Functionally, catalyzes the conversion of dihydroorotate to orotate with quinone as electron acceptor. The protein is Dihydroorotate dehydrogenase (quinone) of Neisseria gonorrhoeae (strain ATCC 700825 / FA 1090).